Reading from the N-terminus, the 263-residue chain is L-aspartate dehydrogenase (263 aa).

NAD(+) is bound by residues alanine 120 and asparagine 186. Histidine 216 is a catalytic residue.

This sequence belongs to the L-aspartate dehydrogenase family.

It catalyses the reaction L-aspartate + NADP(+) + H2O = oxaloacetate + NH4(+) + NADPH + H(+). The enzyme catalyses L-aspartate + NAD(+) + H2O = oxaloacetate + NH4(+) + NADH + H(+). It functions in the pathway cofactor biosynthesis; NAD(+) biosynthesis; iminoaspartate from L-aspartate (dehydrogenase route): step 1/1. Its function is as follows. Specifically catalyzes the NAD or NADP-dependent dehydrogenation of L-aspartate to iminoaspartate. The chain is L-aspartate dehydrogenase from Psychrobacter cryohalolentis (strain ATCC BAA-1226 / DSM 17306 / VKM B-2378 / K5).